Here is a 90-residue protein sequence, read N- to C-terminus: Small ribosomal subunit protein uS19 (90 aa).

It belongs to the universal ribosomal protein uS19 family.

In terms of biological role, protein S19 forms a complex with S13 that binds strongly to the 16S ribosomal RNA. The chain is Small ribosomal subunit protein uS19 from Nitrosococcus oceani (strain ATCC 19707 / BCRC 17464 / JCM 30415 / NCIMB 11848 / C-107).